A 143-amino-acid chain; its full sequence is Nucleoside diphosphate kinase (143 aa).

ATP-binding residues include Lys11, Phe59, Arg87, Thr93, Arg104, and Asn114. The active-site Pros-phosphohistidine intermediate is the His117.

The protein belongs to the NDK family. Homotetramer. Mg(2+) serves as cofactor.

The protein resides in the cytoplasm. The enzyme catalyses a 2'-deoxyribonucleoside 5'-diphosphate + ATP = a 2'-deoxyribonucleoside 5'-triphosphate + ADP. It catalyses the reaction a ribonucleoside 5'-diphosphate + ATP = a ribonucleoside 5'-triphosphate + ADP. In terms of biological role, major role in the synthesis of nucleoside triphosphates other than ATP. The ATP gamma phosphate is transferred to the NDP beta phosphate via a ping-pong mechanism, using a phosphorylated active-site intermediate. The polypeptide is Nucleoside diphosphate kinase (Pseudomonas aeruginosa (strain UCBPP-PA14)).